We begin with the raw amino-acid sequence, 416 residues long: Enterobactin exporter EntS (416 aa).

The Cytoplasmic portion of the chain corresponds to 1–21; it reads MNKQSWLLNLSLLKTHPAFRA. A helical transmembrane segment spans residues 22–42; sequence VFLARFISIVSLGLLGVAVPV. The Periplasmic segment spans residues 43 to 55; sequence QIQMMTHSTWQVG. A helical transmembrane segment spans residues 56 to 76; sequence LSVTLTGGAMFVGLMVGGVLA. Residues 77–83 lie on the Cytoplasmic side of the membrane; the sequence is DRYERKK. Residues 84–104 form a helical membrane-spanning segment; sequence VILLARGTCGIGFIGLCLNAL. The Periplasmic portion of the chain corresponds to 105–109; it reads LPEPS. The helical transmembrane segment at 110–130 threads the bilayer; it reads LLAIYLLGLWDGFFASLGVTA. Residues 131 to 156 are Cytoplasmic-facing; sequence LLAATPALVGRENLMQAGAITMLTVR. A helical membrane pass occupies residues 157–177; sequence LGSVISPMIGGLLLATGGVAW. Residue asparagine 178 is a topological domain, periplasmic. The helical transmembrane segment at 179-199 threads the bilayer; sequence YGLAAAGTFITLLPLLSLPAL. Topologically, residues 200–218 are cytoplasmic; the sequence is PPPPQPREHPLKSLLAGFR. Residues 219–239 traverse the membrane as a helical segment; it reads FLLASPLVGGIALLGGLLTMA. The Periplasmic segment spans residues 240-256; it reads SAVRVLYPALADNWQMS. A helical membrane pass occupies residues 257-277; it reads AAQIGFLYAAIPLGAAIGALT. Residues 278 to 287 lie on the Cytoplasmic side of the membrane; sequence SGKLAHSARP. Residues 288–307 traverse the membrane as a helical segment; it reads GLLMLLSTLGSFLAIGLFGL. Over 308–313 the chain is Periplasmic; sequence MPMWIL. The helical transmembrane segment at 314–336 threads the bilayer; the sequence is GVVCLALFGWLSAVSSLLQYTML. Residues 337 to 356 are Cytoplasmic-facing; it reads QTQTPEAMLGRINGLWTAQN. Residues 357–377 traverse the membrane as a helical segment; it reads VTGDAIGAALLGGLGAMMTPV. A topological domain (periplasmic) is located at residue alanine 378. Residues 379–399 form a helical membrane-spanning segment; sequence SASASGFGLLIIGVLLLLVLV. Over 400-416 the chain is Cytoplasmic; it reads ELRRFRQTPPQVTASDG.

Belongs to the major facilitator superfamily. EntS (TC 2.A.1.38) family.

It localises to the cell inner membrane. Functionally, component of an export pathway for enterobactin. The polypeptide is Enterobactin exporter EntS (Escherichia coli O157:H7).